The primary structure comprises 1727 residues: Nucleoporin alm1 (1727 aa).

Coiled-coil stretches lie at residues Gln-57–Ser-361, Asn-443–Leu-463, Ile-542–Leu-740, Ala-804–Ser-1106, Gly-1223–Lys-1427, Asn-1497–Ala-1555, and Gln-1601–Ser-1664. Residues Glu-1423–Phe-1448 are compositionally biased toward polar residues. Disordered regions lie at residues Glu-1423 to Gln-1459, Glu-1477 to Glu-1500, and Leu-1656 to Lys-1727. Polar residues-rich tracts occupy residues Ala-1672–Glu-1684 and Val-1702–Asp-1714. Ser-1706 carries the phosphoserine modification.

It localises to the nucleus. It is found in the nuclear pore complex. The protein localises to the nucleus envelope. In terms of biological role, maintains the proteasome and its anchor cut8 at the nucleus envelope and is required for kinetochore component proteostasis. Proper kinetochore stoichiometry ensures the correct attachment of kinetochores to spindle microtubules during cytokinesis. Required for the localization of spindle assembly checkpoint (SAC) protein mad2 and bub1 to the nucleus envelope during interphase, but not their localization during mitosis. In Schizosaccharomyces pombe (strain 972 / ATCC 24843) (Fission yeast), this protein is Nucleoporin alm1.